The chain runs to 532 residues: CTP synthase (532 aa).

The segment at 1 to 267 (MAKFVFVTGG…HGLVLDQLQI (267 aa)) is amidoligase domain. Ser13 contacts CTP. Residue Ser13 coordinates UTP. 14-19 (GLGKGI) is a binding site for ATP. Residue Tyr54 coordinates L-glutamine. Residue Asp71 coordinates ATP. Mg(2+)-binding residues include Asp71 and Glu141. Residues 148–150 (DIE), 188–193 (KTKPIQ), and Lys224 each bind CTP. UTP-binding positions include 188–193 (KTKPIQ) and Lys224. Residues 292–532 (EVTFVGKYIE…GFVEAIVNNK (241 aa)) enclose the Glutamine amidotransferase type-1 domain. An L-glutamine-binding site is contributed by Gly354. Cys381 functions as the Nucleophile; for glutamine hydrolysis in the catalytic mechanism. L-glutamine-binding positions include 382 to 385 (LGMQ), Glu405, and Arg462. Residues His507 and Glu509 contribute to the active site.

Belongs to the CTP synthase family. In terms of assembly, homotetramer.

The catalysed reaction is UTP + L-glutamine + ATP + H2O = CTP + L-glutamate + ADP + phosphate + 2 H(+). It catalyses the reaction L-glutamine + H2O = L-glutamate + NH4(+). The enzyme catalyses UTP + NH4(+) + ATP = CTP + ADP + phosphate + 2 H(+). Its pathway is pyrimidine metabolism; CTP biosynthesis via de novo pathway; CTP from UDP: step 2/2. Its activity is regulated as follows. Allosterically activated by GTP, when glutamine is the substrate; GTP has no effect on the reaction when ammonia is the substrate. The allosteric effector GTP functions by stabilizing the protein conformation that binds the tetrahedral intermediate(s) formed during glutamine hydrolysis. Inhibited by the product CTP, via allosteric rather than competitive inhibition. Catalyzes the ATP-dependent amination of UTP to CTP with either L-glutamine or ammonia as the source of nitrogen. Regulates intracellular CTP levels through interactions with the four ribonucleotide triphosphates. The chain is CTP synthase from Mesoplasma florum (strain ATCC 33453 / NBRC 100688 / NCTC 11704 / L1) (Acholeplasma florum).